Here is a 932-residue protein sequence, read N- to C-terminus: PMS1 protein homolog 1 (932 aa).

A disordered region spans residues 465-493 (TQSENGNKDHIDESGENEEEAGLENSSEI). Positions 571-639 (IKKPMSASAL…RYNSQMKRAI (69 aa)) form a DNA-binding region, HMG box.

This sequence belongs to the DNA mismatch repair MutL/HexB family. In terms of assembly, component of the DNA mismatch repair (MMR) complex composed at least of MSH2, MSH3, MSH6, PMS1 and MLH1. The MutL-beta complex is a heterodimer of PMS1 and MLH1. Interacts with MCM9.

Its subcellular location is the nucleus. Functionally, probably involved in the repair of mismatches in DNA. This Homo sapiens (Human) protein is PMS1 protein homolog 1 (PMS1).